The primary structure comprises 452 residues: Transcription factor AP-2-delta (452 aa).

Phosphoserine; by PKA is present on Ser-239. The tract at residues 280–410 (RRKAANVTLL…VLSEMLNYLE (131 aa)) is H-S-H (helix-span-helix), dimerization. Positions 416–452 (KNGGAADSGQGHANSEKAPLRKASEAAVKEGKTEKTD) are disordered. Over residues 429-452 (NSEKAPLRKASEAAVKEGKTEKTD) the composition is skewed to basic and acidic residues.

Belongs to the AP-2 family. As to quaternary structure, binds DNA as a dimer. Can form homodimers or heterodimers with other AP-2 family members. Expressed in both embryonic and newborn brain.

It is found in the nucleus. Functionally, sequence-specific DNA-binding protein that interacts with inducible viral and cellular enhancer elements to regulate transcription of selected genes. AP-2 factors bind to the consensus sequence 5'-GCCNNNGGC-3' and activate genes involved in a large spectrum of important biological functions including proper eye, face, body wall, limb and neural tube development. They also suppress a number of genes including MCAM/MUC18, C/EBP alpha and MYC. This chain is Transcription factor AP-2-delta (Tfap2d), found in Mus musculus (Mouse).